A 292-amino-acid chain; its full sequence is Bifunctional protein FolD (292 aa).

NADP(+) contacts are provided by residues 171-173 (GAS), Ile196, and Ile237.

The protein belongs to the tetrahydrofolate dehydrogenase/cyclohydrolase family. Homodimer.

It carries out the reaction (6R)-5,10-methylene-5,6,7,8-tetrahydrofolate + NADP(+) = (6R)-5,10-methenyltetrahydrofolate + NADPH. The enzyme catalyses (6R)-5,10-methenyltetrahydrofolate + H2O = (6R)-10-formyltetrahydrofolate + H(+). The protein operates within one-carbon metabolism; tetrahydrofolate interconversion. In terms of biological role, catalyzes the oxidation of 5,10-methylenetetrahydrofolate to 5,10-methenyltetrahydrofolate and then the hydrolysis of 5,10-methenyltetrahydrofolate to 10-formyltetrahydrofolate. The chain is Bifunctional protein FolD from Helicobacter acinonychis (strain Sheeba).